The primary structure comprises 443 residues: Two-pore potassium channel 2 (443 aa).

The Cytoplasmic segment spans residues 1-144; sequence MANDGNGDNN…KTDQQSDSKT (144 aa). A disordered region spans residues 67–109; that stretch reads SLPIDALSQNPSTSSSATTSFSDSTDLLLPLTEPNKPVRKSKP. Over residues 72 to 98 the composition is skewed to low complexity; it reads ALSQNPSTSSSATTSFSDSTDLLLPLT. A helical transmembrane segment spans residues 145 to 165; the sequence is IVNQAVALLVVYLSLGVLIYW. Residues 181 to 200 constitute an intramembrane region (pore-forming); it reads DALYFCIVTMCTIGYGDITP. Residues 208–228 form a helical membrane-spanning segment; it reads FSIFFVLVGFGFMDILLSGMV. At 229-274 the chain is on the cytoplasmic side; it reads TYVLDLQENYMLETARNESLNLNDRDKVRSYIIDVKKGRMRIRLKV. The chain crosses the membrane as a helical span at residues 275–295; it reads GLALGVVVLCLGFGVLIMHFV. Positions 302–321 form an intramembrane region, pore-forming; that stretch reads DSFYFSVMSVTTVGYGDRAF. Residues 328–348 form a helical membrane-spanning segment; it reads LLAAMWLLVSTLAVARAILFL. At 349–443 the chain is on the cytoplasmic side; it reads AESRVDKRNR…TKDLPTATSI (95 aa). EF-hand domains lie at 365 to 400 and 404 to 439; these read LGES…KMDK and KDIN…DLPT. The Ca(2+) site is built by aspartate 378, aspartate 380, asparagine 382, cysteine 384, glutamate 389, aspartate 417, serine 421, arginine 423, and aspartate 428.

The protein belongs to the two pore domain potassium channel (TC 1.A.1.7) family. Homodimer. As to expression, expressed in roots, stems, leaves and flowers.

The protein resides in the vacuole membrane. Its function is as follows. Probable voltage-independent potassium-selective tonoplast ion channel. The sequence is that of Two-pore potassium channel 2 (TPK2) from Arabidopsis thaliana (Mouse-ear cress).